Here is a 140-residue protein sequence, read N- to C-terminus: uncharacterized protein (140 aa).

2 helical membrane-spanning segments follow: residues 4–21 (ILKI…YLFG) and 26–48 (LVKV…SGYL).

The protein belongs to the bacteriophage holin family. Cp-1 holin subfamily.

It localises to the cell membrane. This is an uncharacterized protein from Listeria innocua serovar 6a (strain ATCC BAA-680 / CLIP 11262).